The primary structure comprises 1061 residues: E3 SUMO-protein ligase ZNF451 (1061 aa).

The segment at methionine 1 to proline 38 is disordered. Residues methionine 1 to leucine 246 form a sufficient for E3 SUMO-protein ligase activity region. Positions methionine 1–valine 344 are important for interaction with SUMO1 and SUMO2. The tract at residues aspartate 30–glycine 37 is interaction with SUMO2 1. Residues proline 38 to proline 41 carry the PLRP motif. The interaction with SUMO2 2 stretch occupies residues valine 42 to serine 50. Residues lysine 75, lysine 77, lysine 106, isoleucine 121, alanine 130, leucine 138, lysine 139, lysine 144, and lysine 153 each participate in a glycyl lysine isopeptide (Lys-Gly) (interchain with G-Cter in SUMO2) cross-link. Serine 155 is subject to Phosphoserine. Position 158 is an omega-N-methylarginine (arginine 158). Glycyl lysine isopeptide (Lys-Gly) (interchain with G-Cter in SUMO2) cross-links involve residues valine 164 and lysine 167. The interval proline 168–histidine 525 is important for interaction with SMAD4. A C2H2-type 1 zinc finger spans residues isoleucine 169–histidine 195. Residues glutamine 226, glycine 240, proline 247, serine 263, lysine 270, lysine 275, lysine 283, aspartate 286, lysine 288, proline 293, lysine 301, and lysine 309 each participate in a glycyl lysine isopeptide (Lys-Gly) (interchain with G-Cter in SUMO2) cross-link. Residues phenylalanine 253–histidine 277 form a C2H2-type 2 zinc finger. Residues valine 315 to histidine 337 form a C2H2-type 3 zinc finger. A Glycyl lysine isopeptide (Lys-Gly) (interchain with G-Cter in SUMO2) cross-link involves residue lysine 357. Residues glycine 362–histidine 386 form a C2H2-type 4 zinc finger. Lysine 423 is covalently cross-linked (Glycyl lysine isopeptide (Lys-Gly) (interchain with G-Cter in SUMO2)). Serine 432 bears the Phosphoserine mark. Residues lysine 434, lysine 446, lysine 452, lysine 454, lysine 464, phenylalanine 473, valine 490, cysteine 500, lysine 505, aspartate 508, glycine 522, tryptophan 532, lysine 543, and lysine 585 each participate in a glycyl lysine isopeptide (Lys-Gly) (interchain with G-Cter in SUMO2) cross-link. The C2H2-type 5 zinc-finger motif lies at tyrosine 498–histidine 521. The C2H2-type 6 zinc-finger motif lies at phenylalanine 531 to histidine 554. The segment at tryptophan 606–histidine 631 adopts a C2H2-type 7; atypical zinc-finger fold. Residues lysine 632, lysine 647, and lysine 664 each participate in a glycyl lysine isopeptide (Lys-Gly) (interchain with G-Cter in SUMO2) cross-link. A C2H2-type 8 zinc finger spans residues tyrosine 636–histidine 659. The segment at tyrosine 667–histidine 690 adopts a C2H2-type 9 zinc-finger fold. A Glycyl lysine isopeptide (Lys-Gly) (interchain with G-Cter in SUMO1); alternate cross-link involves residue lysine 706. Lysine 706 participates in a covalent cross-link: Glycyl lysine isopeptide (Lys-Gly) (interchain with G-Cter in SUMO2); alternate. Glycyl lysine isopeptide (Lys-Gly) (interchain with G-Cter in SUMO2) cross-links involve residues lysine 731 and lysine 748. Residues phenylalanine 753–histidine 776 form a C2H2-type 10 zinc finger. Residues lysine 777, lysine 779, lysine 790, lysine 817, lysine 827, lysine 832, lysine 843, lysine 845, lysine 852, lysine 951, lysine 992, and lysine 993 each participate in a glycyl lysine isopeptide (Lys-Gly) (interchain with G-Cter in SUMO2) cross-link. The C2H2-type 11 zinc finger occupies isoleucine 789–histidine 812. The segment at leucine 1050–methionine 1061 is important for ubiquitin binding.

The protein belongs to the krueppel C2H2-type zinc-finger protein family. In terms of assembly, homooligomer. Interacts (via N-terminal region) with SUMO1. Interacts (via N-terminal region) with SUMO2. Interacts simultaneously with two SUMO2 chains. Identified in a complex with SUMO2 and UBE2I/UBC9, where one ZNF451 interacts with one UBE2I/UBC9 and two SUMO2 chains, one bound to the UBE2I/UBC9 active site and the other to another region of the same UBE2I/UBC9 molecule. Interacts (via C-terminus) with ubiquitin. Interacts (via N-terminal zinc-finger domains) with SMAD4 (via MH2 domain). Interacts with SMAD2 and SMAD3. Identified in a complex that contains at least ZNF451, SMAD2, SMAD3 and SMAD4. Interacts with EP300. Inhibits interaction between EP300 and the SMAD4 complex. Interacts with SIMC1. Post-translationally, sumoylated. Predominantly sumoylated on the N-terminal region that is important for interaction with SUMO1 and SUMO2. Sumoylation is important for localization in nuclear granules; desumoylation leads to diffuse nucleoplasmic location. Autosumoylated (in vitro). Sumoylation enhances E3 SUMO-protein ligase activity.

Its subcellular location is the nucleus. It localises to the PML body. The protein resides in the nucleoplasm. It participates in protein modification; protein sumoylation. In terms of biological role, E3 SUMO-protein ligase; has a preference for SUMO2 and SUMO3 and facilitates UBE2I/UBC9-mediated sumoylation of target proteins. Plays a role in protein SUMO2 modification in response to stress caused by DNA damage and by proteasome inhibitors (in vitro). Required for MCM4 sumoylation. Has no activity with SUMO1. Preferentially transfers an additional SUMO2 chain onto the SUMO2 consensus site 'Lys-11'. Negatively regulates transcriptional activation mediated by the SMAD4 complex in response to TGF-beta signaling. Inhibits EP300-mediated acetylation of histone H3 at 'Lys-9'. Plays a role in regulating the transcription of AR targets. This Homo sapiens (Human) protein is E3 SUMO-protein ligase ZNF451 (ZNF451).